Reading from the N-terminus, the 144-residue chain is Bacilliredoxin BH1716 (144 aa).

It belongs to the bacilliredoxin family.

The protein is Bacilliredoxin BH1716 of Halalkalibacterium halodurans (strain ATCC BAA-125 / DSM 18197 / FERM 7344 / JCM 9153 / C-125) (Bacillus halodurans).